The chain runs to 317 residues: Long form salivary protein D7L2 (317 aa).

Positions 1–20 (MYKLLVALHLILCTVSHVKT) are cleaved as a signal peptide. 5 cysteine pairs are disulfide-bonded: cysteine 39–cysteine 76, cysteine 72–cysteine 131, cysteine 181–cysteine 214, cysteine 195–cysteine 316, and cysteine 255–cysteine 266. Thromboxane A2-binding residues include tryptophan 58 and tyrosine 73. 5 residues coordinate serotonin: glutamate 182, tyrosine 264, aspartate 281, aspartate 284, and methionine 308.

It belongs to the PBP/GOBP family. In terms of tissue distribution, female salivary gland.

It is found in the secreted. Functionally, modulates blood feeding of female mosquitoes on vertebrate species by binding and sequestering different mediators involved in the host response, such as biogenic amines and eicosanoids. Binds serotonin with high affinity. Binds tryptamine, octopamine, dopamine and noradrenaline with low affinity. Binds leukotriene C4, leukotriene D4, leukotriene E4 and U-46619, a stable analog of thromboxane A2. Does not bind leukotriene B4, adrenaline, histamine and ADP. Inhibits platelet aggregation induced by low concentrations of collagen and arachidonic acid but not by ADP or adrenaline. The polypeptide is Long form salivary protein D7L2 (Anopheles darlingi (Mosquito)).